Consider the following 1277-residue polypeptide: Neural cell adhesion molecule L1 (1277 aa).

The first 34 residues, 1–34 (MAHTQRQQGGSRGQWSRCLLLLLLLPLAAQPGRA), serve as a signal peptide directing secretion. The Extracellular portion of the chain corresponds to 35-1135 (AIQIPSSYYI…VQPSFATQGW (1101 aa)). Ig-like C2-type domains lie at 51–140 (PAIT…TAVS), 150–241 (PPVQ…EPIT), 256–344 (PQMM…YTVT), 349–437 (PYWT…TNVY), and 443–528 (PQIL…AEVE). 5 disulfide bridges follow: C72/C129, C173/C224, C280/C328, C370/C421, and C465/C514. The N-linked (GlcNAc...) asparagine glycan is linked to N317. 3 N-linked (GlcNAc...) asparagine glycosylation sites follow: N503, N520, and N531. In terms of domain architecture, Ig-like C2-type 6 spans 532 to 623 (RTVILSPPQA…DMVEASSTLT (92 aa)). C554 and C607 form a disulfide bridge. 5 consecutive Fibronectin type-III domains span residues 630-725 (PPVH…TPAD), 730-824 (NPED…SGED), 829-931 (APLN…TPEG), 935-1030 (PPMS…TLEG), and 1032-1129 (PPAN…VQPS). The interval 714 to 740 (SKLSDLYKTPADAPDSNPEDVRSESTD) is disordered. N-linked (GlcNAc...) asparagine glycans are attached at residues N794 and N839. 5 N-linked (GlcNAc...) asparagine glycosylation sites follow: N1035, N1046, N1068, N1083, and N1108. Residues 1136-1156 (FIGVVSAVVLLLLVLLILCFI) form a helical membrane-spanning segment. Over 1157-1277 (KRSKGGKYSV…ATNGAPSFLN (121 aa)) the chain is Cytoplasmic. Disordered regions lie at residues 1163–1216 (KYSV…LCSE) and 1232–1277 (NMDE…SFLN). A compositionally biased stretch (basic and acidic residues) spans 1165–1201 (SVKDKEDGPMDSEARPMKDETFGEYRSLESDLEEKRT). Over residues 1232–1242 (NMDESLASQFS) the composition is skewed to polar residues. Over residues 1255–1277 (PDNSPLNPAANPPATNGAPSFLN) the composition is skewed to low complexity.

Belongs to the immunoglobulin superfamily. L1/neurofascin/NgCAM family.

The protein resides in the cell membrane. It is found in the cell projection. The protein localises to the growth cone. Neural cell adhesion molecule involved in the dynamics of cell adhesion and in the generation of transmembrane signals at tyrosine kinase receptors. During brain development, critical in multiple processes, including neuronal migration, axonal growth and fasciculation, and synaptogenesis. In the mature brain, plays a role in the dynamics of neuronal structure and function, including synaptic plasticity. The protein is Neural cell adhesion molecule L1 (l1cam) of Takifugu rubripes (Japanese pufferfish).